A 348-amino-acid chain; its full sequence is Heat-inducible transcription repressor HrcA (348 aa).

The protein belongs to the HrcA family.

Its function is as follows. Negative regulator of class I heat shock genes (grpE-dnaK-dnaJ and groELS operons). Prevents heat-shock induction of these operons. The chain is Heat-inducible transcription repressor HrcA from Syntrophobacter fumaroxidans (strain DSM 10017 / MPOB).